The sequence spans 121 residues: MARIAGVNIPNHKHTEIGLTAIYGIGRSRARKICEATGVPFDKKVKDLTDADLEKLRDEVGKVTVEGDLRRETTMNIKRLMDLGCYRGMRHRKGLPMRGQRTRTNARTRKGPRKAGVALKK.

The tract at residues 91–121 (HRKGLPMRGQRTRTNARTRKGPRKAGVALKK) is disordered.

It belongs to the universal ribosomal protein uS13 family. Part of the 30S ribosomal subunit. Forms a loose heterodimer with protein S19. Forms two bridges to the 50S subunit in the 70S ribosome.

Located at the top of the head of the 30S subunit, it contacts several helices of the 16S rRNA. In the 70S ribosome it contacts the 23S rRNA (bridge B1a) and protein L5 of the 50S subunit (bridge B1b), connecting the 2 subunits; these bridges are implicated in subunit movement. Contacts the tRNAs in the A and P-sites. The polypeptide is Small ribosomal subunit protein uS13 (Cupriavidus taiwanensis (strain DSM 17343 / BCRC 17206 / CCUG 44338 / CIP 107171 / LMG 19424 / R1) (Ralstonia taiwanensis (strain LMG 19424))).